Here is a 220-residue protein sequence, read N- to C-terminus: Uracil-DNA glycosylase 2 (220 aa).

D65 serves as the catalytic Proton acceptor.

It belongs to the uracil-DNA glycosylase (UDG) superfamily. UNG family.

It localises to the cytoplasm. The enzyme catalyses Hydrolyzes single-stranded DNA or mismatched double-stranded DNA and polynucleotides, releasing free uracil.. Excises uracil residues from the DNA which can arise as a result of misincorporation of dUMP residues by DNA polymerase or due to deamination of cytosine. This is Uracil-DNA glycosylase 2 from Bacteroides fragilis (strain ATCC 25285 / DSM 2151 / CCUG 4856 / JCM 11019 / LMG 10263 / NCTC 9343 / Onslow / VPI 2553 / EN-2).